A 150-amino-acid polypeptide reads, in one-letter code: Large ribosomal subunit protein bL9 (150 aa).

It belongs to the bacterial ribosomal protein bL9 family.

In terms of biological role, binds to the 23S rRNA. The polypeptide is Large ribosomal subunit protein bL9 (Stenotrophomonas maltophilia (strain R551-3)).